Reading from the N-terminus, the 211-residue chain is Adenylate kinase (211 aa).

Residue 10–15 (GSGKGT) participates in ATP binding. The interval 30-59 (STGDMLRAEVSKKSPLGLKAEEYMKQGLLV) is NMP. AMP-binding positions include Thr31, Arg36, 57–59 (LLV), 84–87 (GFPR), and Gln91. Residues 125-162 (GRRVCPKCGATYNIYYQKPKNDTLCDNDATPLIQRDDD) are LID. Arg126 serves as a coordination point for ATP. 2 residues coordinate Zn(2+): Cys129 and Cys132. 135–136 (TY) is a binding site for ATP. Zn(2+) contacts are provided by Cys149 and Asp152. Residues Arg159 and Arg170 each contribute to the AMP site. Residue Gly198 coordinates ATP.

Belongs to the adenylate kinase family. As to quaternary structure, monomer.

It is found in the cytoplasm. It carries out the reaction AMP + ATP = 2 ADP. The protein operates within purine metabolism; AMP biosynthesis via salvage pathway; AMP from ADP: step 1/1. In terms of biological role, catalyzes the reversible transfer of the terminal phosphate group between ATP and AMP. Plays an important role in cellular energy homeostasis and in adenine nucleotide metabolism. This chain is Adenylate kinase, found in Hydrogenobaculum sp. (strain Y04AAS1).